We begin with the raw amino-acid sequence, 712 residues long: Osmolarity two-component system protein SSK1 (712 aa).

Positions 73 to 114 (ADNTSSNNTNDNSCRSKSNGAGSGANLSVNSNTKSSVSPTAG) are disordered. Positions 74–85 (DNTSSNNTNDNS) are enriched in low complexity. A compositionally biased stretch (polar residues) spans 87–113 (RSKSNGAGSGANLSVNSNTKSSVSPTA). Residues Ser-110, Ser-195, Ser-327, Ser-351, Ser-368, and Ser-380 each carry the phosphoserine modification. Residues 340–362 (KADLKGKDGNSSPQEFKLITDEE) form a disordered region. Residues 448–468 (EVQRRKEDVTPASPILTSSQT) are disordered. The Response regulatory domain maps to 505-647 (NVLIVEDNVI…WLSKKITEWG (143 aa)). A 4-aspartylphosphate modification is found at Asp-554. The interval 672-712 (KSPQKPIAPSNPHSFKQATSMTPTHSPVRKNSNLSPTQIEL) is disordered. Ser-673 bears the Phosphoserine mark. The span at 682–712 (NPHSFKQATSMTPTHSPVRKNSNLSPTQIEL) shows a compositional bias: polar residues. Thr-693 carries the post-translational modification Phosphothreonine. Ser-703 and Ser-706 each carry phosphoserine.

The protein belongs to the SSK1 family. As to quaternary structure, interacts with SSK2, SSK22 and YPD1. Post-translationally, the phosphorelay mechanism involves the sequential transfer of a phosphate group from 'His-576' (H1) to 'Asp-1144' (D1) of SLN1, then to 'His-64' (H2) of YPD1 and finally to Asp-554 (D2) of SSK1.

Its subcellular location is the cytoplasm. Its function is as follows. Final receptor of the SLN1-YPD1-SSK1 two-component regulatory system, which controls activity of the HOG1 pathway in response to changes in the osmolarity of the extracellular environment. Under normal osmotic conditions, maintained in a phosphorylated and inactive state by the phosphorelay intermediate protein YPD1. Under conditions of high osmolarity, the histidine kinase SLN1 is no longer active and the unphosphorylated form of SSK1 interacts with and activates SSK2 and SSK22, two MAPKKKs that further stimulate the PBS2-HOG1 MAPKK-MAPK cascade. Unphosphorylated SSK1 is subsequently degraded by the UBC7-dependent ubiquitin-proteasome system to down-regulate the HOG1 pathway after completion of the osmotic adaptation. In Saccharomyces cerevisiae (strain ATCC 204508 / S288c) (Baker's yeast), this protein is Osmolarity two-component system protein SSK1.